Consider the following 77-residue polypeptide: Dermaseptin-B9 (77 aa).

The signal sequence occupies residues 1-22 (MAFLKKSLFLVLFLGLVSLSVC). 2 propeptides span residues 23–43 (EEEKRENEDEEEQEDDEQSEE) and 76–77 (EQ).

This sequence belongs to the frog skin active peptide (FSAP) family. Dermaseptin subfamily. As to expression, expressed by the skin glands.

It localises to the secreted. In terms of biological role, has antimicrobial activity. Exhibits a bactericidal activity towards several species of mollicutes, firmicutes and gracilicutes. This peptide is membranotropic and it efficiently depolarizes the plasma membrane. The protein is Dermaseptin-B9 (DRG3) of Phyllomedusa bicolor (Two-colored leaf frog).